The primary structure comprises 554 residues: Undecaprenyl phosphate-alpha-4-amino-4-deoxy-L-arabinose arabinosyl transferase (554 aa).

11 consecutive transmembrane segments (helical) span residues 4–24 (LKDS…LLPV), 87–107 (FGSI…ATLL), 115–135 (VLAT…TYAV), 178–198 (FMTK…PIVI), 206–226 (LVVF…PWAL), 262–282 (YLPI…GALF), 293–313 (ELFF…VAKG), 315–335 (LPTY…AYAT), 351–371 (VINL…GLGL), 384–404 (QKVW…FITL), and 414–434 (AAAC…QQVV).

The protein belongs to the glycosyltransferase 83 family.

It localises to the cell inner membrane. The catalysed reaction is 4-amino-4-deoxy-alpha-L-arabinopyranosyl di-trans,octa-cis-undecaprenyl phosphate + lipid IVA = lipid IIA + di-trans,octa-cis-undecaprenyl phosphate.. Its pathway is lipopolysaccharide metabolism; 4-amino-4-deoxy-beta-L-arabinose-lipid A biosynthesis. Its function is as follows. Catalyzes the transfer of the L-Ara4N moiety of the glycolipid undecaprenyl phosphate-alpha-L-Ara4N to lipid A. The modified arabinose is attached to lipid A and is required for resistance to polymyxin and cationic antimicrobial peptides. The protein is Undecaprenyl phosphate-alpha-4-amino-4-deoxy-L-arabinose arabinosyl transferase of Yersinia pseudotuberculosis serotype O:1b (strain IP 31758).